A 180-amino-acid chain; its full sequence is Negative modulator of initiation of replication (180 aa).

Residues 115-119 (RTRVY) are interaction with DNA.

It belongs to the SeqA family. Homodimer. Polymerizes to form helical filaments.

It is found in the cytoplasm. Its function is as follows. Negative regulator of replication initiation, which contributes to regulation of DNA replication and ensures that replication initiation occurs exactly once per chromosome per cell cycle. Binds to pairs of hemimethylated GATC sequences in the oriC region, thus preventing assembly of replication proteins and re-initiation at newly replicated origins. Repression is relieved when the region becomes fully methylated. This chain is Negative modulator of initiation of replication, found in Aliivibrio fischeri (strain ATCC 700601 / ES114) (Vibrio fischeri).